The following is a 322-amino-acid chain: Nodulation protein Z (322 aa).

The 314-residue stretch at 1–314 (MYNRYVLSRR…NDPSRLVVIE (314 aa)) folds into the GT23 domain.

The protein belongs to the glycosyltransferase 23 family.

Fucosyltransferase which adds the fucose moiety of the nod factor on its terminal reducing N-acetylglucosamine end. Uses GDP-fucose as the donor group. In Sinorhizobium fredii (strain NBRC 101917 / NGR234), this protein is Nodulation protein Z (nodZ).